Here is a 111-residue protein sequence, read N- to C-terminus: Large ribosomal subunit protein eL31 (111 aa).

This sequence belongs to the eukaryotic ribosomal protein eL31 family.

The chain is Large ribosomal subunit protein eL31 (rpl31) from Dictyostelium discoideum (Social amoeba).